We begin with the raw amino-acid sequence, 370 residues long: uncharacterized protein (370 aa).

6 residues coordinate a divalent metal cation: Asp152, His154, Asp184, Asn215, His306, and His308.

It belongs to the metallophosphoesterase superfamily. A divalent metal cation is required as a cofactor.

This is an uncharacterized protein from Helicobacter pylori (strain J99 / ATCC 700824) (Campylobacter pylori J99).